The chain runs to 153 residues: D-aminoacyl-tRNA deacylase (153 aa).

The Gly-cisPro motif, important for rejection of L-amino acids motif lies at 142-143 (GP).

Belongs to the DTD family. In terms of assembly, homodimer.

The protein resides in the cytoplasm. The enzyme catalyses glycyl-tRNA(Ala) + H2O = tRNA(Ala) + glycine + H(+). It catalyses the reaction a D-aminoacyl-tRNA + H2O = a tRNA + a D-alpha-amino acid + H(+). An aminoacyl-tRNA editing enzyme that deacylates mischarged D-aminoacyl-tRNAs. Also deacylates mischarged glycyl-tRNA(Ala), protecting cells against glycine mischarging by AlaRS. Acts via tRNA-based rather than protein-based catalysis; rejects L-amino acids rather than detecting D-amino acids in the active site. By recycling D-aminoacyl-tRNA to D-amino acids and free tRNA molecules, this enzyme counteracts the toxicity associated with the formation of D-aminoacyl-tRNA entities in vivo and helps enforce protein L-homochirality. The chain is D-aminoacyl-tRNA deacylase from Cupriavidus necator (strain ATCC 17699 / DSM 428 / KCTC 22496 / NCIMB 10442 / H16 / Stanier 337) (Ralstonia eutropha).